The chain runs to 453 residues: Gamma-glutamylpolyamine synthetase GlnA2 (453 aa).

Positions 15–100 (RDIRFVRLWF…MFCDILMPDG (86 aa)) constitute a GS beta-grasp domain. The region spanning 107 to 453 (PRYVLKRALA…FELRKSLPVL (347 aa)) is the GS catalytic domain. Residues Glu-130 and Glu-132 each coordinate Mg(2+). Residue Glu-182 coordinates ATP. Mg(2+)-binding residues include Glu-187 and Glu-194. Position 239 (Gly-239) interacts with L-glutamate. His-243 is a Mg(2+) binding site. ATP is bound at residue 245 to 247 (HLS). Arg-296, Glu-310, and Arg-322 together coordinate L-glutamate. The ATP site is built by Arg-322 and Arg-327. Glu-342 contributes to the Mg(2+) binding site. Arg-344 provides a ligand contact to L-glutamate.

It belongs to the glutamine synthetase family. Requires Mg(2+) as cofactor.

It carries out the reaction putrescine + L-glutamate + ATP = gamma-L-glutamylputrescine + ADP + phosphate + H(+). The enzyme catalyses spermine + L-glutamate + ATP = gamma-L-glutamylspermine + ADP + phosphate + H(+). It catalyses the reaction spermidine + L-glutamate + ATP = gamma-L-glutamylspermidine + ADP + phosphate + H(+). The catalysed reaction is cadaverine + L-glutamate + ATP = gamma-L-glutamylcadaverine + ADP + phosphate + H(+). It participates in amine and polyamine degradation; putrescine degradation. It functions in the pathway amine and polyamine degradation; spermidine degradation. Its pathway is amine and polyamine degradation; spermine degradation. With respect to regulation, no effect on activity with glutamine synthetase (GS) inhibitor methionine sulfoximine (MSO). Involved in the catabolism of polyamines. Catalyzes the ATP-dependent gamma-glutamylation of polyamines. Substrates include putrescine, cadaverine, spermidine and spermine, with a preference for short-chain polyamine putrescine. No complementation of the L-glutamine auxotrophy of an E.coli glnA mutant. Together with GlnA3, enables survival of S.coelicolor under exposure to high local environmental polyamine concentrations, which is toxic to the cells. This is Gamma-glutamylpolyamine synthetase GlnA2 from Streptomyces coelicolor (strain ATCC BAA-471 / A3(2) / M145).